Here is a 228-residue protein sequence, read N- to C-terminus: 2-C-methyl-D-erythritol 4-phosphate cytidylyltransferase (228 aa).

Belongs to the IspD/TarI cytidylyltransferase family. IspD subfamily.

It carries out the reaction 2-C-methyl-D-erythritol 4-phosphate + CTP + H(+) = 4-CDP-2-C-methyl-D-erythritol + diphosphate. The protein operates within isoprenoid biosynthesis; isopentenyl diphosphate biosynthesis via DXP pathway; isopentenyl diphosphate from 1-deoxy-D-xylulose 5-phosphate: step 2/6. In terms of biological role, catalyzes the formation of 4-diphosphocytidyl-2-C-methyl-D-erythritol from CTP and 2-C-methyl-D-erythritol 4-phosphate (MEP). This is 2-C-methyl-D-erythritol 4-phosphate cytidylyltransferase from Trichormus variabilis (strain ATCC 29413 / PCC 7937) (Anabaena variabilis).